The primary structure comprises 274 residues: MGSSFKSPADTAKACSAIAELKEKAPLGKVIVLSFLAGAYIAFGGLLAEVVTGGMAKAGYPAGLVKLVFGAVFPVGLMLVVIAGSELFTGNCMYMPLGILDKRASIMGLIRNWVTSWVFNLVGAVFVAYFLAVATGILTADPWQAGALTVAKTKALGGASFIAAGKVTKSLTWAQAFWRAVGCNWLVCLAVYLAIASDDIIGKIWGIWFPIFAFVAIGFEHSVANMFFIPVGIFLGGVTWSQFFMNNLIPVTLGNIVGGAIFVACLYWYTYLKE.

The next 7 membrane-spanning stretches (helical) occupy residues 31 to 51 (IVLS…AEVV), 62 to 82 (AGLV…LVVI), 118 to 138 (VFNL…TGIL), 176 to 196 (AFWR…LAIA), 200 to 220 (IIGK…IGFE), 226 to 246 (MFFI…FFMN), and 248 to 268 (LIPV…CLYW).

The protein belongs to the FNT transporter (TC 1.A.16) family.

The protein resides in the cell membrane. May act as a formate transporter. The protein is Probable formate transporter (fdhC) of Methanothermobacter thermautotrophicus (Methanobacterium thermoformicicum).